A 174-amino-acid polypeptide reads, in one-letter code: MSKKNTLDDQDVSLFREAIAGARPIKQDTIRLHSPAIKQKAQIREIRETQQALHYFSDEYEPLLNQDGPVKYCRADVSTYEVKKLRRGDYIPDMMLDLHGLTQQQAKSELAALIEACRRQHIRCACVMHGHGKNILKQRIPLWLAQHPDVMAFHQAPKLWGGDAAILVLIEQNI.

Positions 96–171 (LDLHGLTQQQ…GDAAILVLIE (76 aa)) constitute a Smr domain.

It belongs to the SmrB family. Associates with collided ribosomes, but not with correctly translating polysomes.

Acts as a ribosome collision sensor. Detects stalled/collided disomes (pairs of ribosomes where the leading ribosome is stalled and a second ribosome has collided with it) and endonucleolytically cleaves mRNA at the 5' boundary of the stalled ribosome. Stalled/collided disomes form a new interface (primarily via the 30S subunits) that binds SmrB. Cleaved mRNA becomes available for tmRNA ligation, leading to ribosomal subunit dissociation and rescue of stalled ribosomes. This chain is Ribosome rescue factor SmrB, found in Tolumonas auensis (strain DSM 9187 / NBRC 110442 / TA 4).